A 383-amino-acid chain; its full sequence is Lipid-A-disaccharide synthase (383 aa).

It belongs to the LpxB family.

It carries out the reaction a lipid X + a UDP-2-N,3-O-bis[(3R)-3-hydroxyacyl]-alpha-D-glucosamine = a lipid A disaccharide + UDP + H(+). It participates in bacterial outer membrane biogenesis; LPS lipid A biosynthesis. Its function is as follows. Condensation of UDP-2,3-diacylglucosamine and 2,3-diacylglucosamine-1-phosphate to form lipid A disaccharide, a precursor of lipid A, a phosphorylated glycolipid that anchors the lipopolysaccharide to the outer membrane of the cell. The sequence is that of Lipid-A-disaccharide synthase from Anaeromyxobacter sp. (strain K).